A 664-amino-acid chain; its full sequence is MLGRLSLSAIPLDVPILVGTFIGVVIVGVAVLGLITYYGKWGYLWKEWFTSVDHKRLAAMYIILALVALFRGFADAIMMRTQLALAYAGNPGYLPPHHYDQIFSAHGTIMIFFLAMAFMTGLFNFIVPLQIGARDVAFPFLNNLSFWMTAVAFILVNVSLFIGEFSQCGWLAYPPLSENQFSPGVGVDYYIWAVQISGVGTLLTGVNFFVTIVKMRAPGMTWRKMPVFTWTALCASILIMVAFPVLTVAVGLLGMDRYFGMHFFTNDGGGNQMMYLNLIWAWGHPEVYILVIPAFGVFSEVVPAFSGKPLFGYSTMVYATCSIMVLSFLVWVHHFFTMGAGPDVNAFFGIATMIISIPTGIKLFNWLFTMYKGRIQFHACMYWAVGFMITFTIGGMTGVMLAIPGADFVLHNSLFLIAHFHNTIIGGVYFGYICGMNFWFPKVMGFKLDETWGKRAFWFWFVGFYCAFVPLYIVGFEGMTRRLNHYDNPAWHPWLLVAEVGAVLVMLGIACQLTQLYVSIRDRNLPQNRDVTGDPWNGRTLEWSTSSPPPVYNFAIVPHVHELDTFMLDKENGIDTRQAGAQYEAIHMPKNTSFGSGLCKCSALIFGFAAVWYIWWLAAVGLVGVIGTVIARSADKDIDYYIPAEEVARIENEHTRKLMAQAAE.

A run of 2 helical transmembrane segments spans residues 15–35 (PILVGTFIGVVIVGVAVLGLI) and 57–77 (LAAMYIILALVALFRGFADAI). H106 contributes to the heme b binding site. A run of 12 helical transmembrane segments spans residues 109-129 (IMIFFLAMAFMTGLFNFIVPL), 136-156 (VAFPFLNNLSFWMTAVAFILV), 190-210 (YIWAVQISGVGTLLTGVNFFV), 233-253 (LCASILIMVAFPVLTVAVGLL), 278-298 (LIWAWGHPEVYILVIPAFGVF), 316-336 (MVYATCSIMVLSFLVWVHHFF), 347-367 (FFGIATMIISIPTGIKLFNWL), 383-403 (WAVGFMITFTIGGMTGVMLAI), 414-434 (LFLIAHFHNTIIGGVYFGYIC), 456-476 (AFWFWFVGFYCAFVPLYIVGF), 490-510 (AWHPWLLVAEVGAVLVMLGIA), and 603-623 (ALIFGFAAVWYIWWLAAVGLV). Cu cation contacts are provided by H284, Y288, H333, and H334. The segment at residues 284-288 (HPEVY) is a cross-link (1'-histidyl-3'-tyrosine (His-Tyr)). H419 contributes to the Fe(II)-heme a binding site. H421 lines the heme b pocket.

The protein belongs to the heme-copper respiratory oxidase family. In terms of assembly, heterotetramer of the subunits 1, 2, 3 and 4.

Its subcellular location is the cell membrane. Catalytic subunit of the enzyme. Electrons originating in a quinol are transferred to the bimetallic center formed by heme a and copper B. This Acetobacter aceti protein is Ubiquinol oxidase subunit 1 (cyaA).